A 502-amino-acid polypeptide reads, in one-letter code: Alpha-globin transcription factor CP2 (502 aa).

A Grh/CP2 DB domain is found at 63 to 300 (EILPFQYVLC…SPGFNSSHSS (238 aa)). The tract at residues 133-386 (EHQQLEGWRW…LFNALKGRMV (254 aa)) is DNA-binding. Basic and acidic residues predominate over residues 241–265 (KGADRKQKIDREKMEKRTPHEKEKY). Disordered regions lie at residues 241–268 (KGAD…YQPS) and 294–326 (FNSS…NLLP). Phosphoserine is present on Ser-353.

Belongs to the grh/CP2 family. CP2 subfamily. In terms of assembly, binds to DNA as a dimer. Interacts with UBP1 and PIAS1, and is probably part of a complex containing TFCP2, UBP1 and PIAS1. Component of the SSP (stage selector protein) complex, which appears to be a heteromer of TFCP2 and 2 copies of NFE4.

It localises to the nucleus. Functionally, binds a variety of cellular promoters including fibrinogen, alpha-globin promoters. Activation of the alpha-globin promoter in erythroid cells is via synergistic interaction with UBP1. Functions as part of the SSP (stage selector protein) complex. Facilitates the interaction of the gamma-globin genes with enhancer elements contained in the locus control region in fetal erythroid cells. Interacts by binding to the stage selector element (SSE) in the proximal gamma-globin promoter. The polypeptide is Alpha-globin transcription factor CP2 (Tfcp2) (Mus musculus (Mouse)).